The chain runs to 530 residues: UPF0422 protein lpg2959 (530 aa).

The signal sequence occupies residues Met-1 to Ala-19. A coiled-coil region spans residues Asp-20–Ala-66. The disordered stretch occupies residues Leu-50–Ala-81. Over residues Gln-63–Pro-75 the composition is skewed to low complexity.

It belongs to the UPF0422 family.

In Legionella pneumophila subsp. pneumophila (strain Philadelphia 1 / ATCC 33152 / DSM 7513), this protein is UPF0422 protein lpg2959.